The sequence spans 178 residues: Adenine phosphoribosyltransferase (178 aa).

This sequence belongs to the purine/pyrimidine phosphoribosyltransferase family. As to quaternary structure, homodimer.

It localises to the cytoplasm. It catalyses the reaction AMP + diphosphate = 5-phospho-alpha-D-ribose 1-diphosphate + adenine. It functions in the pathway purine metabolism; AMP biosynthesis via salvage pathway; AMP from adenine: step 1/1. Catalyzes a salvage reaction resulting in the formation of AMP, that is energically less costly than de novo synthesis. The polypeptide is Adenine phosphoribosyltransferase (Cereibacter sphaeroides (strain ATCC 17029 / ATH 2.4.9) (Rhodobacter sphaeroides)).